The sequence spans 376 residues: Methionine import ATP-binding protein MetN 1 (376 aa).

In terms of domain architecture, ABC transporter spans 34–273; the sequence is VRFINLGKTY…PQHEVSKTLL (240 aa). Residue 70 to 77 coordinates ATP; that stretch reads GRSGAGKS.

This sequence belongs to the ABC transporter superfamily. Methionine importer (TC 3.A.1.24) family. In terms of assembly, the complex is composed of two ATP-binding proteins (MetN), two transmembrane proteins (MetI) and a solute-binding protein (MetQ).

The protein resides in the cell inner membrane. The enzyme catalyses L-methionine(out) + ATP + H2O = L-methionine(in) + ADP + phosphate + H(+). It carries out the reaction D-methionine(out) + ATP + H2O = D-methionine(in) + ADP + phosphate + H(+). Functionally, part of the ABC transporter complex MetNIQ involved in methionine import. Responsible for energy coupling to the transport system. The protein is Methionine import ATP-binding protein MetN 1 of Pseudomonas syringae pv. tomato (strain ATCC BAA-871 / DC3000).